Consider the following 194-residue polypeptide: Holliday junction branch migration complex subunit RuvA (194 aa).

The segment at 1-64 (MIARLSGILV…EDAQLLYGFG (64 aa)) is domain I. A domain II region spans residues 65-141 (SDQERATFRQ…FAIDGGTALA (77 aa)). The segment at 141-144 (AGSN) is flexible linker. The segment at 145–194 (PAKSASSDVLNALLALGYNEREALAAVKQLPADIAVAEGIKLSLKSLSKT) is domain III.

This sequence belongs to the RuvA family. As to quaternary structure, homotetramer. Forms an RuvA(8)-RuvB(12)-Holliday junction (HJ) complex. HJ DNA is sandwiched between 2 RuvA tetramers; dsDNA enters through RuvA and exits via RuvB. An RuvB hexamer assembles on each DNA strand where it exits the tetramer. Each RuvB hexamer is contacted by two RuvA subunits (via domain III) on 2 adjacent RuvB subunits; this complex drives branch migration. In the full resolvosome a probable DNA-RuvA(4)-RuvB(12)-RuvC(2) complex forms which resolves the HJ.

It localises to the cytoplasm. The RuvA-RuvB-RuvC complex processes Holliday junction (HJ) DNA during genetic recombination and DNA repair, while the RuvA-RuvB complex plays an important role in the rescue of blocked DNA replication forks via replication fork reversal (RFR). RuvA specifically binds to HJ cruciform DNA, conferring on it an open structure. The RuvB hexamer acts as an ATP-dependent pump, pulling dsDNA into and through the RuvAB complex. HJ branch migration allows RuvC to scan DNA until it finds its consensus sequence, where it cleaves and resolves the cruciform DNA. The polypeptide is Holliday junction branch migration complex subunit RuvA (Methylobacillus flagellatus (strain ATCC 51484 / DSM 6875 / VKM B-1610 / KT)).